Here is a 62-residue protein sequence, read N- to C-terminus: Large ribosomal subunit protein bL28 (62 aa).

Belongs to the bacterial ribosomal protein bL28 family.

The polypeptide is Large ribosomal subunit protein bL28 (Aster yellows witches'-broom phytoplasma (strain AYWB)).